Reading from the N-terminus, the 430-residue chain is UDP-N-acetylglucosamine 1-carboxyvinyltransferase 1 (430 aa).

22 to 23 (KN) contacts phosphoenolpyruvate. UDP-N-acetyl-alpha-D-glucosamine is bound at residue arginine 102. Cysteine 126 functions as the Proton donor in the catalytic mechanism. A 2-(S-cysteinyl)pyruvic acid O-phosphothioketal modification is found at cysteine 126. UDP-N-acetyl-alpha-D-glucosamine-binding positions include 131-135 (RPVDL), 172-175 (KVSV), aspartate 317, and isoleucine 339.

It belongs to the EPSP synthase family. MurA subfamily.

Its subcellular location is the cytoplasm. It carries out the reaction phosphoenolpyruvate + UDP-N-acetyl-alpha-D-glucosamine = UDP-N-acetyl-3-O-(1-carboxyvinyl)-alpha-D-glucosamine + phosphate. The protein operates within cell wall biogenesis; peptidoglycan biosynthesis. Its function is as follows. Cell wall formation. Adds enolpyruvyl to UDP-N-acetylglucosamine. This Mesorhizobium japonicum (strain LMG 29417 / CECT 9101 / MAFF 303099) (Mesorhizobium loti (strain MAFF 303099)) protein is UDP-N-acetylglucosamine 1-carboxyvinyltransferase 1.